Here is a 433-residue protein sequence, read N- to C-terminus: Eukaryotic peptide chain release factor subunit 1 (433 aa).

Q182 is subject to N5-methylglutamine. Residue S425 is modified to Phosphoserine.

This sequence belongs to the eukaryotic release factor 1 family. In terms of assembly, component of the eRF1-eRF3-GTP ternary complex, composed of sup45/eRF1, sup35/eRF3 and GTP.

The protein localises to the cytoplasm. Its function is as follows. Component of the eRF1-eRF3-GTP ternary complex, a ternary complex that mediates translation termination in response to the termination codons. The eRF1-eRF3-GTP complex binds to a stop codon in the ribosomal A-site. Sup45/eRF1 is responsible for stop codon recognition and inducing hydrolysis of peptidyl-tRNA. Following GTP hydrolysis by sup35/eRF3, sup35/eRF3 dissociates, permitting sup45/eRF1 to accommodate fully in the A-site. This Schizosaccharomyces pombe (strain 972 / ATCC 24843) (Fission yeast) protein is Eukaryotic peptide chain release factor subunit 1 (sup45).